The sequence spans 470 residues: Putative gustatory receptor 28b (470 aa).

Over 1-76 (MDIEMAKEPV…KTGKKAIKKT (76 aa)) the chain is Cytoplasmic. The chain crosses the membrane as a helical span at residues 77–97 (IFGYINGIMHIAMFVFAYSLT). Residues 98-119 (IYNNCESVASYFFRSRITYFGD) are Extracellular-facing. The chain crosses the membrane as a helical span at residues 120–140 (LMQIVSGFIGVTVIYLTAFVP). Residues 141 to 175 (NHRLERCLQKFHTMDVQLQTVGVKIMYSKVLRFSY) are Cytoplasmic-facing. The chain crosses the membrane as a helical span at residues 176–196 (MVLISMFLVNVLFTGGTFSVL). The Extracellular segment spans residues 197–204 (YSSEVAPT). The chain crosses the membrane as a helical span at residues 205–225 (MALHFTFLIQHTVIAIAIALF). Over 226–309 (SCFTYLVEMR…ATANKYFTYQ (84 aa)) the chain is Cytoplasmic. Residues 310-330 (LLTIISIAFLIIVFDAYYVLE) traverse the membrane as a helical segment. Residues 331–346 (TLLGKSKRESKFKTVE) lie on the Extracellular side of the membrane. A helical membrane pass occupies residues 347–367 (FVTFFSCQMILYLIAIISIVE). Residues 368 to 423 (GSNRAIKKSEKTGGIVHSLLNKTKSAEVKEKLQQFSMQLMHLKINFTAAGLFNIDR) are Cytoplasmic-facing. A helical membrane pass occupies residues 424-444 (TLYFTISGALTTYLIILLQFT). Residues 445–470 (SNSPNNGYGNGSSCCETFNNMTNHTL) are Extracellular-facing. N-linked (GlcNAc...) asparagine glycans are attached at residues asparagine 454, asparagine 464, and asparagine 467.

It belongs to the insect chemoreceptor superfamily. Gustatory receptor (GR) family. Gr66a subfamily. As to expression, isoforms A and E have taste neuron-specific expression restricted to the labial palps, the internal taste organs in the pharynx, and the legs. In addition to expression in a large number of taste neurons, isoform A is also expressed in a few nonchemosensory neurons, including the campaniform sensilla of the wing, leg stretch receptors, and multiple dendritic neurons in the abdomen. Isoform B is the only receptor not expressed in gustatory receptor neurons in the labellum. We observe expression of this receptor in a single large cell at the base of each maxillary palp, in campaniform sensilla of the wing, and multiple dendritic neurons in the abdomen. Isoform C is expressed by many gustatory receptor neurons in the labial palps, the pharyngeal taste clusters, and taste neurons in the legs. In addition, isoform C expressed in a single cell at the base of the maxillary palps, neurons in the Johnston's organ (JO), campaniform sensilla of the wing, stretch receptors and the femoral chordotonal organ of the legs, and multiple dendritic neurons in the abdomen. Isoform D is expressed in a small number of gustatory receptor neurons in the labial palps, the ventral cibarial sense organ (VCSO), and legs. Atypical expression is observed in three neurons in the arista, campaniform sensilla of the wing, stretch and femoral chordotonal organ receptors in the legs, and multiple dendritic neurons in the abdomen. In larvae, Isoform A is expressed in neurons of the terminal external chemosensory organ and the dorsal external chemosensory organ; and isoform E is expressed in neurons of the terminal external chemosensory organ.

Its subcellular location is the cell membrane. In terms of biological role, probable gustatory receptor which mediates acceptance or avoidance behavior, depending on its substrates. Atypical expression also suggests nongustatory roles in the nervous system and tissues involved in proprioception, hygroreception, and other sensory modalities. It is also possible that it has chemosensory roles in the detection of internal ligands. This Drosophila melanogaster (Fruit fly) protein is Putative gustatory receptor 28b (Gr28b).